Consider the following 550-residue polypeptide: MTPADLATLIKQTAVEVLTSRDLDASMLPEQIVVERPRNPEHGDYATNVALQVAKKVGVTPRDLGTWLAEALAADDSIDSAEIAGPGFINIRLAAAAQGEIVAKILEQGEKFGTSDHLSHLDVNLEFVSANPTGPIHLGGTRWAAVGDSLGRVLEAAGAKVTREYYFNDHGRQIDRFALSLLAAAKGEPTPEDGYGGEYIREIAEAIVAKHPDALDRTPEETQELFRSEGVEMMFSHIRESLHEFGTDFDVYFHENSLFESGAVDRAVQKLKDNGNLYESDGAWWLRSTDFGDDKDRVVIKSDGDAAYIAGDIAYVQDKFERGHNLNIYMLGADHHGYIARLKAAAAALGYAPEGVEVLIGQMVNLLRDGTAVRMSKRAGTVVTLDDLVEAIGIDAARYSLIRSSVDSSLDIDLGLWESQSSDNPVYYVQYGHARLCSIARKAADLGVTYEDADLSLLTHDREGDLIRTLGEFPAVIRAAADLREPHRIARYAEELAGTFHRFYDSCQILPKADEEKAPIHAARLALAAATRQTLANALALVGVSAPEKM.

Positions 130–140 match the 'HIGH' region motif; that stretch reads ANPTGPIHLGG.

Belongs to the class-I aminoacyl-tRNA synthetase family. In terms of assembly, monomer.

The protein localises to the cytoplasm. It catalyses the reaction tRNA(Arg) + L-arginine + ATP = L-arginyl-tRNA(Arg) + AMP + diphosphate. This Corynebacterium efficiens (strain DSM 44549 / YS-314 / AJ 12310 / JCM 11189 / NBRC 100395) protein is Arginine--tRNA ligase.